Reading from the N-terminus, the 522-residue chain is Exo-alpha-(1-&gt;6)-L-arabinofuranosidase (522 aa).

Residues Glu-39, Asn-84, and Asn-185 each coordinate alpha-L-arabinofuranose. Glu-186 functions as the Proton donor/acceptor in the catalytic mechanism. Tyr-257, Glu-310, and Gln-370 together coordinate alpha-L-arabinofuranose. Catalysis depends on Glu-310, which acts as the Nucleophile.

The protein belongs to the glycosyl hydrolase 51 family. Homohexamer; trimer of dimers.

The enzyme catalyses Hydrolysis of terminal non-reducing alpha-L-arabinofuranoside residues in alpha-L-arabinosides.. It carries out the reaction (20S)-ginsenoside Rc + H2O = L-arabinofuranose + (20S)-ginsenoside Rd. With respect to regulation, completely inhibited by Cu(2+) and partially inhibited by Co(2+) and Ba(2+). Catalyzes the hydrolysis of p-nitrophenyl-alpha-L-arabinofuranoside (pNP-alphaL-Af) and the hydrolysis of the terminal alpha-L-arabinofuranoside at the C20 position of ginsenoside Rc to produce ginsenoside Rd. Cannot hydrolyze p-nitrophenyl-alpha-L-arabinopyranoside (pNP-alphaL-Ap) and ginsenoside Rb2. This Bifidobacterium longum protein is Exo-alpha-(1-&gt;6)-L-arabinofuranosidase.